Reading from the N-terminus, the 232-residue chain is Peptide deformylase (232 aa).

Fe cation-binding residues include C135 and H178. Residue E179 is part of the active site. H182 provides a ligand contact to Fe cation.

Belongs to the polypeptide deformylase family. Requires Fe(2+) as cofactor.

It carries out the reaction N-terminal N-formyl-L-methionyl-[peptide] + H2O = N-terminal L-methionyl-[peptide] + formate. Functionally, removes the formyl group from the N-terminal Met of newly synthesized proteins. Requires at least a dipeptide for an efficient rate of reaction. N-terminal L-methionine is a prerequisite for activity but the enzyme has broad specificity at other positions. This Deinococcus radiodurans (strain ATCC 13939 / DSM 20539 / JCM 16871 / CCUG 27074 / LMG 4051 / NBRC 15346 / NCIMB 9279 / VKM B-1422 / R1) protein is Peptide deformylase.